A 303-amino-acid chain; its full sequence is Cell wall mannoprotein HSP150 (303 aa).

An N-terminal signal peptide occupies residues 1–18 (MQYKKTLVASALAATTLA). A propeptide spanning residues 19 to 72 (AYAPSEPWSTLTPTATYSGGVTDYASTFGIAVQPISTTSSASSAATTASSKAKR) is cleaved from the precursor. PIR1/2/3 repeat units lie at residues 71-89 (KRAA…TTTA) and 97-113 (AAAV…ATTK). The PIR1/2/3 3; degenerate repeat unit spans residues 114–134 (TTAAASLKLVMVKIQATTKTT). PIR1/2/3 repeat units lie at residues 135–153 (AAAV…TKTT), 154–171 (AAAV…TTKT), and 172–190 (TQAA…SATS).

The protein belongs to the PIR protein family. In terms of processing, covalently linked to beta-1,3-glucan of the inner cell wall layer via an alkali-sensitive ester linkage between the gamma-carboxyl group of glutamic acids, arising from specific glutamines within the PIR1/2/3 repeats, and hydroxyl groups of glucoses of beta-1,3-glucan chains. Post-translationally, the propeptide is cleaved off in the late Golgi. While both peptides are secreted, only a fraction of the mature glycoprotein is incorporated into the cell wall. O-glycosylated. Extensively O-mannosylated.

Its subcellular location is the secreted. The protein resides in the cell wall. Component of the outer cell wall layer. Required for stability of the cell wall and for optimal growth. Required for resistance against several antifungal and cell wall-perturbing agents and for tolerance to heat shock. The sequence is that of Cell wall mannoprotein HSP150 (HSP150) from Saccharomyces cerevisiae (strain AWRI1631) (Baker's yeast).